The primary structure comprises 272 residues: Shikimate dehydrogenase (NADP(+)) (272 aa).

Residues 14 to 16 (SKS) and Thr61 contribute to the shikimate site. Catalysis depends on Lys65, which acts as the Proton acceptor. Glu77 lines the NADP(+) pocket. Residues Asn86 and Asp102 each coordinate shikimate. Residues 126–130 (GAGGA), 149–154 (NRTASR), and Met213 each bind NADP(+). Shikimate is bound at residue Tyr215. Gly237 is an NADP(+) binding site.

It belongs to the shikimate dehydrogenase family. Homodimer.

It catalyses the reaction shikimate + NADP(+) = 3-dehydroshikimate + NADPH + H(+). It participates in metabolic intermediate biosynthesis; chorismate biosynthesis; chorismate from D-erythrose 4-phosphate and phosphoenolpyruvate: step 4/7. Involved in the biosynthesis of the chorismate, which leads to the biosynthesis of aromatic amino acids. Catalyzes the reversible NADPH linked reduction of 3-dehydroshikimate (DHSA) to yield shikimate (SA). In Salmonella choleraesuis (strain SC-B67), this protein is Shikimate dehydrogenase (NADP(+)).